Consider the following 166-residue polypeptide: Phospholipase A2 inhibitor CgMIP-II (166 aa).

A signal peptide spans 1–19 (MRLILLSGLLLLGTFLANG). The 116-residue stretch at 46–161 (LRYALMTVHN…CDDNLLVVCE (116 aa)) folds into the C-type lectin domain. 2 cysteine pairs are disulfide-bonded: cysteine 83/cysteine 160 and cysteine 138/cysteine 152. Asparagine 122 carries an N-linked (GlcNAc...) asparagine glycan.

Belongs to the alpha-type phospholipase A2 inhibitor family. In terms of assembly, homomer composed of 20-25-kDa subunits that form oligomers of 180 kDa. N-glycosylated. The glycosidic chain may contain superficial sialic acid residues. Expressed by the liver.

It localises to the secreted. Selectively inhibits the toxic properties of myotoxin-II from the same venom (AC P81165). Does not inhibit PLA2, anti-coagulant and lethal activities of the basic myotoxin I from the same venom (AC P0DQP6), nor the different crotoxin forms (heterodimer or subunit B alone). Does not block the enzymatic activity of crude acidic PLA2 fractions from the same venom. The chain is Phospholipase A2 inhibitor CgMIP-II from Cerrophidion godmani (Porthidium godmani).